A 277-amino-acid chain; its full sequence is Bifunctional protein FolD 1 (277 aa).

NADP(+)-binding positions include 162–164 (GDS) and Ser187.

This sequence belongs to the tetrahydrofolate dehydrogenase/cyclohydrolase family. In terms of assembly, homodimer.

The enzyme catalyses (6R)-5,10-methylene-5,6,7,8-tetrahydrofolate + NADP(+) = (6R)-5,10-methenyltetrahydrofolate + NADPH. It carries out the reaction (6R)-5,10-methenyltetrahydrofolate + H2O = (6R)-10-formyltetrahydrofolate + H(+). It participates in one-carbon metabolism; tetrahydrofolate interconversion. Catalyzes the oxidation of 5,10-methylenetetrahydrofolate to 5,10-methenyltetrahydrofolate and then the hydrolysis of 5,10-methenyltetrahydrofolate to 10-formyltetrahydrofolate. This chain is Bifunctional protein FolD 1, found in Syntrophomonas wolfei subsp. wolfei (strain DSM 2245B / Goettingen).